Consider the following 200-residue polypeptide: MASKSKGLVVLALLLAAAILVASADEHPQAKKEENEAGVENFFHGGGGHHGHGRGGHGGGGYGGGGGYGGGGGGYPGGGGGYGGGGGGYPGHGGEGGGGYGGGGGYPGHGGEGGGGYGGGGGYHGHGGEGGGGYGGGGGYHGHGGEGGGGYGGGGGGYPGHGGGGGHGGGRCKWGCCGHGFLHHGCRCCARADEVPEVRN.

Positions Met1–Ala24 are cleaved as a signal peptide.

Belongs to the GRP family.

Its subcellular location is the secreted. It is found in the cell wall. In terms of biological role, responsible for plasticity of the cell wall. This is Glycine-rich cell wall structural protein (GRP) from Hordeum vulgare (Barley).